The chain runs to 130 residues: Small ribosomal subunit protein uS8 (130 aa).

This sequence belongs to the universal ribosomal protein uS8 family. Part of the 30S ribosomal subunit.

In terms of biological role, one of the primary rRNA binding proteins, it binds directly to 16S rRNA central domain where it helps coordinate assembly of the platform of the 30S subunit. The chain is Small ribosomal subunit protein uS8 from Pyrococcus horikoshii (strain ATCC 700860 / DSM 12428 / JCM 9974 / NBRC 100139 / OT-3).